The primary structure comprises 492 residues: MGSNTEATEIPKMPLKIVFLTLPIAGHMLHIVDTASTFAIHGVECTIITTPANVPFIEKSISATNTTIRQFLSIRLVDFPHEAVGLPPGVENFSAVTCPDMRPKISKGLSIIQKPTEDLIKEISPDCIVSDMFYPWTSDFALEIGVPRVVFRGCGMFPMCCWHSIKSHLPHEKVDRDDEMIVLPTLPDHIEMRKSTLPDWVRKPTGYSYLMKMIDAAELKSYGVIVNSFSDLERDYEEYFKNVTGLKVWTVGPISLHVGRNEELEGSDEWVKWLDGKKLDSVIYVSFGGVAKFPPHQLREIAAGLESSGHDFVWVVRASDENGDQAEADEWSLQKFKEKMKKTNHGLVIESWVPQLMFLEHKAIGGMLTHVGWGTMLEGITAGLPLVTWPLYAEQFYNERLVVDVLKIGVGVGVKEFCGLDDIGKKETIGRENIEASVRLVMGDGEEAAAMRLRVKELSEASMKAVREGGSSKANIHDFLNELSTLRSLRQA.

The Proton acceptor role is filled by His27. The Charge relay role is filled by Asp131. Residues Trp352, Val353, His370, Thr375, Glu378, and Tyr392 each coordinate UDP.

The protein belongs to the UDP-glycosyltransferase family. Mainly expressed in flowers, flower buds and young leaves, and, to a lesser extent, in old leaves, stems and roots.

Its pathway is secondary metabolite biosynthesis; terpenoid biosynthesis. Component of the oleanane-type triterpene saponins (e.g. saponarioside A and saponarioside B) biosynthetic pathway, leading to the production of natural products with detergent properties used as traditional sources of soap. A glycosyltransferase that mediates the conversion of QA-mono to QA-di via the elongation of the C-3 sugar chain with a D-galactose. This Saponaria officinalis (Common soapwort) protein is UDP-glucosyl transferase 73DL1.